We begin with the raw amino-acid sequence, 184 residues long: Protein Syd (184 aa).

This sequence belongs to the Syd family.

The protein resides in the cell inner membrane. In terms of biological role, interacts with the SecY protein in vivo. May bind preferentially to an uncomplexed state of SecY, thus functioning either as a chelating agent for excess SecY in the cell or as a regulatory factor that negatively controls the translocase function. The protein is Protein Syd of Psychromonas ingrahamii (strain DSM 17664 / CCUG 51855 / 37).